A 132-amino-acid chain; its full sequence is Small ribosomal subunit protein uS8 (132 aa).

Belongs to the universal ribosomal protein uS8 family. In terms of assembly, part of the 30S ribosomal subunit. Contacts proteins S5 and S12.

One of the primary rRNA binding proteins, it binds directly to 16S rRNA central domain where it helps coordinate assembly of the platform of the 30S subunit. The polypeptide is Small ribosomal subunit protein uS8 (Staphylococcus haemolyticus (strain JCSC1435)).